A 463-amino-acid polypeptide reads, in one-letter code: L-seryl-tRNA(Sec) selenium transferase (463 aa).

Lys-295 is modified (N6-(pyridoxal phosphate)lysine).

This sequence belongs to the SelA family. Homodecamer; pentamer of dimers. Binds only one seryl-tRNA(Sec) per dimer. Requires pyridoxal 5'-phosphate as cofactor.

Its subcellular location is the cytoplasm. The enzyme catalyses L-seryl-tRNA(Sec) + selenophosphate + H(+) = L-selenocysteinyl-tRNA(Sec) + phosphate. It functions in the pathway aminoacyl-tRNA biosynthesis; selenocysteinyl-tRNA(Sec) biosynthesis; selenocysteinyl-tRNA(Sec) from L-seryl-tRNA(Sec) (bacterial route): step 1/1. Functionally, converts seryl-tRNA(Sec) to selenocysteinyl-tRNA(Sec) required for selenoprotein biosynthesis. This Escherichia coli (strain SMS-3-5 / SECEC) protein is L-seryl-tRNA(Sec) selenium transferase.